Here is a 185-residue protein sequence, read N- to C-terminus: MSQLTIYNAVSEGNDPPLPSLHTTDAAIVAAELSQRGIRFQQWPTHDELDAASSQEEILAAYSAEIAEVQAAGGYQTVDAISLGPDHPQRAELRQKFLSEHTHSEDEVRFFVDGRGLFCLHIGDEVLQVLCERNDWLSVPAGTRHWFDMGERPCFSAIRFFNNQDGWVAQFTGDPIAKRYPLLGS.

Residues histidine 101, histidine 103, glutamate 107, and histidine 145 each coordinate Fe(2+). Histidine 101, histidine 103, glutamate 107, and histidine 145 together coordinate Ni(2+).

It belongs to the acireductone dioxygenase (ARD) family. As to quaternary structure, monomer. The cofactor is Fe(2+). It depends on Ni(2+) as a cofactor.

It catalyses the reaction 1,2-dihydroxy-5-(methylsulfanyl)pent-1-en-3-one + O2 = 3-(methylsulfanyl)propanoate + CO + formate + 2 H(+). The catalysed reaction is 1,2-dihydroxy-5-(methylsulfanyl)pent-1-en-3-one + O2 = 4-methylsulfanyl-2-oxobutanoate + formate + 2 H(+). It functions in the pathway amino-acid biosynthesis; L-methionine biosynthesis via salvage pathway; L-methionine from S-methyl-5-thio-alpha-D-ribose 1-phosphate: step 5/6. Catalyzes 2 different reactions between oxygen and the acireductone 1,2-dihydroxy-3-keto-5-methylthiopentene (DHK-MTPene) depending upon the metal bound in the active site. Fe-containing acireductone dioxygenase (Fe-ARD) produces formate and 2-keto-4-methylthiobutyrate (KMTB), the alpha-ketoacid precursor of methionine in the methionine recycle pathway. Ni-containing acireductone dioxygenase (Ni-ARD) produces methylthiopropionate, carbon monoxide and formate, and does not lie on the methionine recycle pathway. This Synechococcus sp. (strain RCC307) protein is Acireductone dioxygenase.